Here is a 254-residue protein sequence, read N- to C-terminus: GPI alpha-1,4-mannosyltransferase I, stabilizing subunit (254 aa).

Positions methionine 1–alanine 22 are cleaved as a signal peptide. At aspartate 23 to leucine 226 the chain is on the lumenal side. N-linked (GlcNAc...) asparagine glycosylation occurs at asparagine 211. Residues valine 227–phenylalanine 247 traverse the membrane as a helical segment. Topologically, residues lysine 248–leucine 254 are cytoplasmic.

It belongs to the PIGX family. As to quaternary structure, part of the glycosylphosphatidylinositol-mannosyltransferase I complex that is composed of PIGM and PIGX. Interacts with PIGM; PIGX stabilizes PIGM.

The protein localises to the endoplasmic reticulum membrane. Its pathway is glycolipid biosynthesis; glycosylphosphatidylinositol-anchor biosynthesis. In terms of biological role, stabilizing subunit of the glycosylphosphatidylinositol-mannosyltransferase I complex which catalyzes the transfer of the first mannose, via an alpha-1,4 bond from a dolichol-phosphate-mannose (Dol-P-Man) to the glucosaminyl acyl phosphatidylinositol (GlcN-(acyl)PI) intermediate to generate alpha-D-Man-(1-&gt;4)-alpha-D-GlcN-(1-&gt;6)-(1-radyl,2-acyl-sn-glycero-3-phospho)-2-acyl-inositol and participates in the sixth step of the glycosylphosphatidylinositol-anchor biosynthesis. Probably acts by stabilizing the mannosyltransferase PIGM. The sequence is that of GPI alpha-1,4-mannosyltransferase I, stabilizing subunit from Mus musculus (Mouse).